The chain runs to 711 residues: Ribosomal RNA large subunit methyltransferase K/L (711 aa).

One can recognise a THUMP domain in the interval 42–153 (DAQRAVLWSR…KGRATISVDL (112 aa)).

Belongs to the methyltransferase superfamily. RlmKL family.

It is found in the cytoplasm. The catalysed reaction is guanosine(2445) in 23S rRNA + S-adenosyl-L-methionine = N(2)-methylguanosine(2445) in 23S rRNA + S-adenosyl-L-homocysteine + H(+). It carries out the reaction guanosine(2069) in 23S rRNA + S-adenosyl-L-methionine = N(2)-methylguanosine(2069) in 23S rRNA + S-adenosyl-L-homocysteine + H(+). In terms of biological role, specifically methylates the guanine in position 2445 (m2G2445) and the guanine in position 2069 (m7G2069) of 23S rRNA. The polypeptide is Ribosomal RNA large subunit methyltransferase K/L (Xanthomonas oryzae pv. oryzae (strain MAFF 311018)).